The sequence spans 478 residues: Ankyrin repeat and BTB/POZ domain-containing protein 1 (478 aa).

ANK repeat units lie at residues 1 to 31 and 35 to 64; these read MDTSDLFASCRKGDVGRVRYLLEQRDVEVNV and WDSTPLYYACLCGHEELVLYLLANGARCEA. 2 BTB domains span residues 115–182 and 272–346; these read SDVV…DIGV and PDIC…ELSP. Residues 451-477 adopt a coiled-coil conformation; sequence VQTYSAIEEAQQRLRALEDLLVSIGLD.

As to expression, ubiquitously expressed in all fetal tissues examined including heart, brain, liver, and kidney. Also expressed at lower levels in both adult heart and hypertrophic heart.

Its subcellular location is the cytoplasm. Functionally, may act as a mediator of the PTEN growth-suppressive signaling pathway. May play a role in developmental processes. This Homo sapiens (Human) protein is Ankyrin repeat and BTB/POZ domain-containing protein 1.